The primary structure comprises 210 residues: MNLITRVSVHSWSQVDLTHIIVQERVHFLHPLTHGSASQEIAQCYMPIIHGNFFVHYLQPWKAFFPTSEQKIAELTSQAMKIIRADFSVQVHFGKLWMRNALLNLRYAQIFTPKLPNINTQTEAIILGAGPSLEKGIEKIRSHRDVYTIFACDTAFPVCCTGGLMPDFFISIDPQYISYATHYVFIPFTGNCNIRHMRVSMRSTQFLFEW.

This is an uncharacterized protein from Treponema pallidum (strain Nichols).